Reading from the N-terminus, the 967-residue chain is Vitamin B12-dependent ribonucleotide reductase (967 aa).

The tract at residues 1-23 (MTETASGPARSSRAKGTKAGKGL) is disordered. Substrate is bound by residues Ser143, 159–160 (AC), Gly188, 364–368 (NPCSE), and 554–558 (PTGTI). Cys160 and Cys377 are oxidised to a cystine. Residue Asn364 is the Proton acceptor of the active site. The Cysteine radical intermediate role is filled by Cys366. Glu368 acts as the Proton acceptor in catalysis.

The protein belongs to the ribonucleoside diphosphate reductase class-2 family. It depends on adenosylcob(III)alamin as a cofactor.

The catalysed reaction is a 2'-deoxyribonucleoside 5'-diphosphate + [thioredoxin]-disulfide + H2O = a ribonucleoside 5'-diphosphate + [thioredoxin]-dithiol. Functionally, catalyzes the reduction of ribonucleotides to deoxyribonucleotides. May function to provide a pool of deoxyribonucleotide precursors for DNA repair during oxygen limitation and/or for immediate growth after restoration of oxygen. This is Vitamin B12-dependent ribonucleotide reductase (nrdJ) from Streptomyces coelicolor (strain ATCC BAA-471 / A3(2) / M145).